A 403-amino-acid polypeptide reads, in one-letter code: Probable eukaryotic initiation factor 4A (403 aa).

Residues 1 to 29 (MAQNDKIAPQDQDSFLDDQPGVRPIPSFD) form a disordered region. A Q motif motif is present at residues 26 to 54 (PSFDDMPLHQNLLRGIYSYGFEKPSSIQQ). The region spanning 57-230 (IAPFTRGGDI…KKFMRDPVRI (174 aa)) is the Helicase ATP-binding domain. 70–77 (AQSGTGKT) is a binding site for ATP. The DEAD box motif lies at 178–181 (DEAD). Positions 241–401 (GIKQFFIAVE…ELPVDFAAYL (161 aa)) constitute a Helicase C-terminal domain.

It belongs to the DEAD box helicase family. eIF4A subfamily. As to quaternary structure, eIF4F is a multi-subunit complex, the composition of which varies with external and internal environmental conditions. It is composed of at least EIF4A, EIF4E and EIF4G.

The catalysed reaction is ATP + H2O = ADP + phosphate + H(+). ATP-dependent RNA helicase which is a subunit of the eIF4F complex involved in cap recognition and is required for mRNA binding to ribosome. In the current model of translation initiation, eIF4A unwinds RNA secondary structures in the 5'-UTR of mRNAs which is necessary to allow efficient binding of the small ribosomal subunit, and subsequent scanning for the initiator codon. This is Probable eukaryotic initiation factor 4A from Leishmania infantum.